A 244-amino-acid chain; its full sequence is Globin-like protein 9 (244 aa).

Positions 1 to 38 (MRRMAKYDRSYSMQDAHGPNGLARRGTQRGCSRSKSTR) are disordered. The region spanning 47–200 (SLTFSQKQAL…LIDELRGGFE (154 aa)) is the Globin domain. The heme site is built by His-111 and His-143.

This sequence belongs to the globin family.

This is Globin-like protein 9 from Caenorhabditis briggsae.